A 315-amino-acid chain; its full sequence is ATP synthase gamma chain (315 aa).

The protein belongs to the ATPase gamma chain family. F-type ATPases have 2 components, CF(1) - the catalytic core - and CF(0) - the membrane proton channel. CF(1) has five subunits: alpha(3), beta(3), gamma(1), delta(1), epsilon(1). CF(0) has three main subunits: a, b and c.

It is found in the cellular thylakoid membrane. Its function is as follows. Produces ATP from ADP in the presence of a proton gradient across the membrane. The gamma chain is believed to be important in regulating ATPase activity and the flow of protons through the CF(0) complex. The sequence is that of ATP synthase gamma chain from Cyanothece sp. (strain PCC 7425 / ATCC 29141).